A 353-amino-acid polypeptide reads, in one-letter code: DNA polymerase IV (353 aa).

Positions 6-187 (IIHIDCDCFY…LPVTKLHGVG (182 aa)) constitute a UmuC domain. Mg(2+) is bound by residues Asp-10 and Asp-105. The active site involves Glu-106.

The protein belongs to the DNA polymerase type-Y family. As to quaternary structure, monomer. The cofactor is Mg(2+).

The protein localises to the cytoplasm. It catalyses the reaction DNA(n) + a 2'-deoxyribonucleoside 5'-triphosphate = DNA(n+1) + diphosphate. Functionally, poorly processive, error-prone DNA polymerase involved in untargeted mutagenesis. Copies undamaged DNA at stalled replication forks, which arise in vivo from mismatched or misaligned primer ends. These misaligned primers can be extended by PolIV. Exhibits no 3'-5' exonuclease (proofreading) activity. May be involved in translesional synthesis, in conjunction with the beta clamp from PolIII. This Pseudomonas syringae pv. tomato (strain ATCC BAA-871 / DC3000) protein is DNA polymerase IV.